We begin with the raw amino-acid sequence, 125 residues long: 14 kDa phosphohistidine phosphatase (125 aa).

The residue at position 2 (Ala2) is an N-acetylalanine. A substrate-binding site is contributed by Lys21. The Proton acceptor role is filled by His53. Residue 94–96 coordinates substrate; it reads SMA.

It belongs to the janus family. In terms of assembly, monomer. Expressed abundantly in heart and skeletal muscle.

The protein localises to the cytoplasm. It catalyses the reaction N(pros)-phospho-L-histidyl-[protein] + H2O = L-histidyl-[protein] + phosphate. The enzyme catalyses N(tele)-phospho-L-histidyl-[protein] + H2O = L-histidyl-[protein] + phosphate. Its function is as follows. Exhibits phosphohistidine phosphatase activity. The protein is 14 kDa phosphohistidine phosphatase (PHPT1) of Homo sapiens (Human).